The primary structure comprises 355 residues: Type II methyltransferase M.MthZI (355 aa).

This sequence belongs to the N(4)/N(6)-methyltransferase family. N(4) subfamily.

The catalysed reaction is a 2'-deoxycytidine in DNA + S-adenosyl-L-methionine = an N(4)-methyl-2'-deoxycytidine in DNA + S-adenosyl-L-homocysteine + H(+). In terms of biological role, a beta subtype methylase that recognizes the double-stranded sequence 5'-CTAG-3', methylates C-1 on both strands, and protects the DNA from cleavage by the MthZI endonuclease. The polypeptide is Type II methyltransferase M.MthZI (Methanothermobacter thermautotrophicus (Methanobacterium thermoformicicum)).